A 199-amino-acid polypeptide reads, in one-letter code: Recombination protein RecR (199 aa).

The C4-type zinc finger occupies 56–71 (CTVCFNVTEQETCNIC). Residues 79–174 (SVICVVEESK…TVTRLASGLP (96 aa)) form the Toprim domain.

The protein belongs to the RecR family.

Functionally, may play a role in DNA repair. It seems to be involved in an RecBC-independent recombinational process of DNA repair. It may act with RecF and RecO. The polypeptide is Recombination protein RecR (Paenarthrobacter aurescens (strain TC1)).